The sequence spans 122 residues: Large ribosomal subunit protein uL14 (122 aa).

This sequence belongs to the universal ribosomal protein uL14 family. As to quaternary structure, part of the 50S ribosomal subunit. Forms a cluster with proteins L3 and L19. In the 70S ribosome, L14 and L19 interact and together make contacts with the 16S rRNA in bridges B5 and B8.

Functionally, binds to 23S rRNA. Forms part of two intersubunit bridges in the 70S ribosome. The polypeptide is Large ribosomal subunit protein uL14 (Streptococcus pyogenes serotype M2 (strain MGAS10270)).